A 228-amino-acid polypeptide reads, in one-letter code: Cytochrome c oxidase subunit 2 (228 aa).

Residues 1 to 14 (MAYPFQLGFQDATS) are Mitochondrial intermembrane-facing. Residues 15-45 (PIMEELLHFHDHTLMIVFLISSLVLYIISLM) form a helical membrane-spanning segment. At 46–59 (LTTKLTHTSTMDAQ) the chain is on the mitochondrial matrix side. A helical transmembrane segment spans residues 60–87 (EVETIWTILPAIILILIALPSLRILYMM). Residues 88 to 228 (DEINNPALTV…FEKWSTSMLT (141 aa)) lie on the Mitochondrial intermembrane side of the membrane. The Cu cation site is built by His-161, Cys-196, Glu-198, Cys-200, His-204, and Met-207. Glu-198 contacts Mg(2+). Phosphotyrosine is present on Tyr-218.

It belongs to the cytochrome c oxidase subunit 2 family. In terms of assembly, component of the cytochrome c oxidase (complex IV, CIV), a multisubunit enzyme composed of 14 subunits. The complex is composed of a catalytic core of 3 subunits MT-CO1, MT-CO2 and MT-CO3, encoded in the mitochondrial DNA, and 11 supernumerary subunits COX4I, COX5A, COX5B, COX6A, COX6B, COX6C, COX7A, COX7B, COX7C, COX8 and NDUFA4, which are encoded in the nuclear genome. The complex exists as a monomer or a dimer and forms supercomplexes (SCs) in the inner mitochondrial membrane with NADH-ubiquinone oxidoreductase (complex I, CI) and ubiquinol-cytochrome c oxidoreductase (cytochrome b-c1 complex, complex III, CIII), resulting in different assemblies (supercomplex SCI(1)III(2)IV(1) and megacomplex MCI(2)III(2)IV(2)). Found in a complex with TMEM177, COA6, COX18, COX20, SCO1 and SCO2. Interacts with TMEM177 in a COX20-dependent manner. Interacts with COX20. Interacts with COX16. It depends on Cu cation as a cofactor.

It is found in the mitochondrion inner membrane. It carries out the reaction 4 Fe(II)-[cytochrome c] + O2 + 8 H(+)(in) = 4 Fe(III)-[cytochrome c] + 2 H2O + 4 H(+)(out). Its function is as follows. Component of the cytochrome c oxidase, the last enzyme in the mitochondrial electron transport chain which drives oxidative phosphorylation. The respiratory chain contains 3 multisubunit complexes succinate dehydrogenase (complex II, CII), ubiquinol-cytochrome c oxidoreductase (cytochrome b-c1 complex, complex III, CIII) and cytochrome c oxidase (complex IV, CIV), that cooperate to transfer electrons derived from NADH and succinate to molecular oxygen, creating an electrochemical gradient over the inner membrane that drives transmembrane transport and the ATP synthase. Cytochrome c oxidase is the component of the respiratory chain that catalyzes the reduction of oxygen to water. Electrons originating from reduced cytochrome c in the intermembrane space (IMS) are transferred via the dinuclear copper A center (CU(A)) of subunit 2 and heme A of subunit 1 to the active site in subunit 1, a binuclear center (BNC) formed by heme A3 and copper B (CU(B)). The BNC reduces molecular oxygen to 2 water molecules using 4 electrons from cytochrome c in the IMS and 4 protons from the mitochondrial matrix. The chain is Cytochrome c oxidase subunit 2 (MT-CO2) from Sus scrofa (Pig).